The primary structure comprises 1366 residues: DNA-directed RNA polymerase subunit beta' (1366 aa).

A compositionally biased stretch (basic residues) spans 1–20; that stretch reads MTSSKPKKTSRVRKTTKNSK. The interval 1 to 33 is disordered; the sequence is MTSSKPKKTSRVRKTTKNSKKNNPVTMPALAKT. The Zn(2+) site is built by Cys-248, Cys-315, Cys-322, and Cys-325. Residues 1291 to 1366 form a disordered region; that stretch reads YTVDMPQSPA…LQEEGLLSDE (76 aa). Over residues 1354–1366 the composition is skewed to low complexity; sequence LEGLQEEGLLSDE.

The protein belongs to the RNA polymerase beta' chain family. RpoC2 subfamily. As to quaternary structure, in cyanobacteria the RNAP catalytic core is composed of 2 alpha, 1 beta, 1 beta', 1 gamma and 1 omega subunit. When a sigma factor is associated with the core the holoenzyme is formed, which can initiate transcription. The cofactor is Zn(2+).

The enzyme catalyses RNA(n) + a ribonucleoside 5'-triphosphate = RNA(n+1) + diphosphate. In terms of biological role, DNA-dependent RNA polymerase catalyzes the transcription of DNA into RNA using the four ribonucleoside triphosphates as substrates. The chain is DNA-directed RNA polymerase subunit beta' from Prochlorococcus marinus (strain AS9601).